Reading from the N-terminus, the 441-residue chain is Ribosomal protein uS12 methylthiotransferase RimO (441 aa).

In terms of domain architecture, MTTase N-terminal spans 8-118; that stretch reads PKIGFVSLGC…VLEHVHHYVP (111 aa). Residues Cys17, Cys53, Cys82, Cys150, Cys154, and Cys157 each coordinate [4Fe-4S] cluster. The region spanning 136-373 is the Radical SAM core domain; it reads LTPRHYAYLK…MQLQQQISAE (238 aa). A TRAM domain is found at 376 to 441; sequence QEKVGREILV…DEYDLWGSRV (66 aa).

It belongs to the methylthiotransferase family. RimO subfamily. Requires [4Fe-4S] cluster as cofactor.

Its subcellular location is the cytoplasm. It catalyses the reaction L-aspartate(89)-[ribosomal protein uS12]-hydrogen + (sulfur carrier)-SH + AH2 + 2 S-adenosyl-L-methionine = 3-methylsulfanyl-L-aspartate(89)-[ribosomal protein uS12]-hydrogen + (sulfur carrier)-H + 5'-deoxyadenosine + L-methionine + A + S-adenosyl-L-homocysteine + 2 H(+). Catalyzes the methylthiolation of an aspartic acid residue of ribosomal protein uS12. This Shigella sonnei (strain Ss046) protein is Ribosomal protein uS12 methylthiotransferase RimO.